A 222-amino-acid chain; its full sequence is GTP-binding nuclear protein Ran-4 (222 aa).

The 165-residue stretch at D10–D174 folds into the Small GTPase Ran-type domain. D21 to T28 provides a ligand contact to GTP. Positions H40–V48 are switch-I. Residues G71, N125–D128, and S153–K155 contribute to the GTP site. The interval G71 to Q87 is switch-II.

The protein belongs to the small GTPase superfamily. Ran family. In terms of assembly, found in a nuclear export complex with RanGTP, exportin and pre-miRNA.

The protein resides in the nucleus. Functionally, GTP-binding protein involved in nucleocytoplasmic transport. Required for the import of protein into the nucleus and also for RNA export. Involved in chromatin condensation and control of cell cycle. The protein is GTP-binding nuclear protein Ran-4 (RAN4) of Arabidopsis thaliana (Mouse-ear cress).